The primary structure comprises 405 residues: Tyrosine--tRNA ligase (405 aa).

An L-tyrosine-binding site is contributed by tyrosine 35. The 'HIGH' region signature appears at 40–49; that stretch reads ATSSSLHIGH. L-tyrosine contacts are provided by tyrosine 166 and glutamine 170. The short motif at 226-230 is the 'KMSKS' region element; that stretch reads KMGKS. Position 229 (lysine 229) interacts with ATP. One can recognise an S4 RNA-binding domain in the interval 340 to 405; it reads ILLVDLMLDS…GKKKFLRIVI (66 aa).

It belongs to the class-I aminoacyl-tRNA synthetase family. TyrS type 1 subfamily. In terms of assembly, homodimer.

It localises to the cytoplasm. The catalysed reaction is tRNA(Tyr) + L-tyrosine + ATP = L-tyrosyl-tRNA(Tyr) + AMP + diphosphate + H(+). In terms of biological role, catalyzes the attachment of tyrosine to tRNA(Tyr) in a two-step reaction: tyrosine is first activated by ATP to form Tyr-AMP and then transferred to the acceptor end of tRNA(Tyr). The polypeptide is Tyrosine--tRNA ligase (Borreliella burgdorferi (strain ATCC 35210 / DSM 4680 / CIP 102532 / B31) (Borrelia burgdorferi)).